A 443-amino-acid chain; its full sequence is DNA primase DnaG (443 aa).

The Toprim domain occupies 169 to 243 (DSIIIVEGRA…DIDYVSRAPY (75 aa)). Mg(2+)-binding residues include Glu-175, Asp-217, and Asp-219.

Belongs to the archaeal DnaG primase family. Forms a ternary complex with MCM helicase and DNA. Requires Mg(2+) as cofactor.

The enzyme catalyses ssDNA + n NTP = ssDNA/pppN(pN)n-1 hybrid + (n-1) diphosphate.. RNA polymerase that catalyzes the synthesis of short RNA molecules used as primers for DNA polymerase during DNA replication. The chain is DNA primase DnaG from Methanococcus vannielii (strain ATCC 35089 / DSM 1224 / JCM 13029 / OCM 148 / SB).